The following is a 202-amino-acid chain: Ras-related protein Rab-18 (202 aa).

The GTP site is built by Ser20, Gly23, Lys24, Ser25, Ser26, Asp37, Pro38, Thr43, Gly69, Lys126, Asp128, and Ala155. The Effector region signature appears at 40–48; sequence QAATIGVDF. A disordered region spans residues 183–202; it reads RPTFRLGQPTDTSSGNLCGC. A compositionally biased stretch (polar residues) spans 191 to 202; sequence PTDTSSGNLCGC. S-geranylgeranyl cysteine attachment occurs at residues Cys200 and Cys202. At Cys202 the chain carries Cysteine methyl ester.

This sequence belongs to the small GTPase superfamily. Rab family.

It catalyses the reaction GTP + H2O = GDP + phosphate + H(+). Its function is as follows. The small GTPases Rab are key regulators of intracellular membrane trafficking, from the formation of transport vesicles to their fusion with membranes. Rabs cycle between an inactive GDP-bound form and an active GTP-bound form that is able to recruit to membranes different sets of downstream effectors directly responsible for vesicle formation, movement, tethering and fusion. Plays a role in apical endocytosis/recycling. May be implicated in transport between the plasma membrane and early endosomes. In Caenorhabditis briggsae, this protein is Ras-related protein Rab-18 (rab-18).